We begin with the raw amino-acid sequence, 203 residues long: dTTP/UTP pyrophosphatase (203 aa).

The Proton acceptor role is filled by Asp-74.

Belongs to the Maf family. YhdE subfamily. The cofactor is a divalent metal cation.

It localises to the cytoplasm. It carries out the reaction dTTP + H2O = dTMP + diphosphate + H(+). The catalysed reaction is UTP + H2O = UMP + diphosphate + H(+). Its function is as follows. Nucleoside triphosphate pyrophosphatase that hydrolyzes dTTP and UTP. May have a dual role in cell division arrest and in preventing the incorporation of modified nucleotides into cellular nucleic acids. The chain is dTTP/UTP pyrophosphatase from Treponema denticola (strain ATCC 35405 / DSM 14222 / CIP 103919 / JCM 8153 / KCTC 15104).